The sequence spans 218 residues: Ras-related protein Rab-4A (218 aa).

9 residues coordinate GTP: G23, T24, G25, K26, S27, C28, S42, H44, and T45. A Mg(2+)-binding site is contributed by S27. Residues 44-49 (HTIGVE) carry the Switch 1 motif. Mg(2+) is bound by residues T45 and D68. A Switch 2 motif is present at residues 70-79 (AGQERFRSVT). G71 lines the GTP pocket. Q72 bears the 5-glutamyl serotonin mark. GTP-binding residues include N126, K127, D129, A157, and L158. S190 carries the post-translational modification Phosphoserine. The residue at position 204 (S204) is a Phosphoserine; by CDK1. 2 S-geranylgeranyl cysteine lipidation sites follow: C216 and C218. C218 carries the cysteine methyl ester modification.

It belongs to the small GTPase superfamily. Rab family. Interacts with SGSM1, SGSM2 and SGSM3. Interacts with RAB11FIP1, RABEP1, ZFYVE20 and RUFY1. Interacts (membrane-bound form) with NDRG1; the interaction involves NDRG1 in vesicular recycling of E-cadherin. Interacts (in GTP-bound form) with GRIPAP1 (via N-terminus). Interacts with RABEP1 and RBSN. Does not interact with HPS4. Does not interact with HPS4. Interacts with RABEP2; this interaction may mediate VEGFR2 cell surface expression. Mg(2+) serves as cofactor. In terms of processing, serotonylation of Gln-72 by TGM2 during activation and aggregation of platelets leads to constitutive activation of GTPase activity. Phosphorylated by CDK1 kinase during mitosis. In terms of tissue distribution, expressed in the central nervous system, including cortex, cerebellum, midbrain and spinal cord, and in the kidney, lung, liver and spleen.

It localises to the membrane. The protein resides in the cytoplasm. Its subcellular location is the early endosome membrane. The protein localises to the recycling endosome membrane. The enzyme catalyses GTP + H2O = GDP + phosphate + H(+). Regulated by guanine nucleotide exchange factors (GEFs) which promote the exchange of bound GDP for free GTP. Regulated by GTPase activating proteins (GAPs) which increase the GTP hydrolysis activity. Inhibited by GDP dissociation inhibitors (GDIs). Its function is as follows. The small GTPases Rab are key regulators of intracellular membrane trafficking, from the formation of transport vesicles to their fusion with membranes. Rabs cycle between an inactive GDP-bound form and an active GTP-bound form that is able to recruit to membranes different sets of downstream effectors directly responsible for vesicle formation, movement, tethering and fusion. RAB4A is involved in protein transport. Also plays a role in vesicular traffic. Mediates VEGFR2 endosomal trafficking to enhance VEGFR2 signaling. Acts as a regulator of platelet alpha-granule release during activation and aggregation of platelets. This chain is Ras-related protein Rab-4A, found in Mus musculus (Mouse).